The following is a 306-amino-acid chain: SDS degradation transcriptional activation protein (306 aa).

One can recognise an HTH lysR-type domain in the interval 1–59; sequence MNDLRQLRHFVALAEHGHFARAAEAVNLSQPALSRSIQALENGLGCRLLDRGPRQVSLT. Residues 19–38 constitute a DNA-binding region (H-T-H motif); the sequence is FARAAEAVNLSQPALSRSIQ.

This sequence belongs to the LysR transcriptional regulatory family.

Activates the transcription of the sdsA gene for sodium dodecyl sulfate (SDS) degradation. This Pseudomonas sp. (strain ATCC 19151) protein is SDS degradation transcriptional activation protein (sdsB).